The following is a 77-amino-acid chain: Inhibitor of histone-like protein HU (77 aa).

Interacts with host homodimeric histone-like protein (HU) hupA; thereby replacing dsDNA from the HU-DNA complex.

In terms of biological role, acts as a host growth inhibitor by inhibiting DNA-binding of microbial histone-like protein HU, thereby preventing chromosome segregation and causing filamentous cell morphology and growth defects in the host. In Bacillus phage SP01 (Bacteriophage SP01), this protein is Inhibitor of histone-like protein HU.